We begin with the raw amino-acid sequence, 216 residues long: Probable nicotinate-nucleotide adenylyltransferase (216 aa).

It belongs to the NadD family.

It carries out the reaction nicotinate beta-D-ribonucleotide + ATP + H(+) = deamido-NAD(+) + diphosphate. Its pathway is cofactor biosynthesis; NAD(+) biosynthesis; deamido-NAD(+) from nicotinate D-ribonucleotide: step 1/1. Its function is as follows. Catalyzes the reversible adenylation of nicotinate mononucleotide (NaMN) to nicotinic acid adenine dinucleotide (NaAD). The sequence is that of Probable nicotinate-nucleotide adenylyltransferase from Shewanella baltica (strain OS195).